We begin with the raw amino-acid sequence, 121 residues long: Small ribosomal subunit protein uS13 (121 aa).

The disordered stretch occupies residues 94 to 121 (GLPVRGQRTRTNSRTRKGPKKGAAALKK).

Belongs to the universal ribosomal protein uS13 family. As to quaternary structure, part of the 30S ribosomal subunit. Forms a loose heterodimer with protein S19. Forms two bridges to the 50S subunit in the 70S ribosome.

Its function is as follows. Located at the top of the head of the 30S subunit, it contacts several helices of the 16S rRNA. In the 70S ribosome it contacts the 23S rRNA (bridge B1a) and protein L5 of the 50S subunit (bridge B1b), connecting the 2 subunits; these bridges are implicated in subunit movement. Contacts the tRNAs in the A and P-sites. The sequence is that of Small ribosomal subunit protein uS13 from Leptothrix cholodnii (strain ATCC 51168 / LMG 8142 / SP-6) (Leptothrix discophora (strain SP-6)).